The following is a 51-amino-acid chain: uncharacterized protein (51 aa).

Residues 20–42 (NFFSRMWNAVVFGFGAAIGASVA) traverse the membrane as a helical segment.

Its subcellular location is the membrane. This is an uncharacterized protein from Schizosaccharomyces pombe (strain 972 / ATCC 24843) (Fission yeast).